The following is a 732-amino-acid chain: Acetophenone carboxylase gamma subunit (732 aa).

This sequence belongs to the HyuA family. Acetophenone carboxylase consists of five subunits; a heterooctameric subcomplex of two alpha (Apc1), two beta (Apc2), two gamma (Apc3) and two delta (Apc4) subunits assembles with the epsilon (Apc5) subunit in an unknown stoichiometry. The cofactor is Mg(2+). Requires Mn(2+) as cofactor.

It localises to the cytoplasm. It catalyses the reaction acetophenone + hydrogencarbonate + 2 ATP + H2O = 3-oxo-3-phenylpropanoate + 2 ADP + 2 phosphate + 2 H(+). Its activity is regulated as follows. Inhibited by zinc ions, carbamoylphosphate and beta,gamma-imido-ATP. Its function is as follows. Catalyzes the carboxylation of acetophenone to form 3-oxo-3-phenylpropanoate (benzoylacetate) in the anaerobic catabolism of ethylbenzene. Also carboxylates propiophenone at the same rate and 4-acetyl-pyridine at lower rates. The polypeptide is Acetophenone carboxylase gamma subunit (apc3) (Aromatoleum aromaticum (strain DSM 19018 / LMG 30748 / EbN1) (Azoarcus sp. (strain EbN1))).